The chain runs to 331 residues: Glucokinase (331 aa).

Residue 16-21 (GDIGGT) participates in ATP binding.

This sequence belongs to the bacterial glucokinase family.

It localises to the cytoplasm. It catalyses the reaction D-glucose + ATP = D-glucose 6-phosphate + ADP + H(+). This chain is Glucokinase, found in Pseudomonas aeruginosa (strain LESB58).